The following is a 197-amino-acid chain: Transcription factor FapR (197 aa).

It belongs to the FapR family.

Transcriptional factor involved in regulation of membrane lipid biosynthesis by repressing genes involved in fatty acid and phospholipid metabolism. This is Transcription factor FapR from Bacillus cereus (strain 03BB102).